We begin with the raw amino-acid sequence, 202 residues long: LexA repressor (202 aa).

The H-T-H motif DNA-binding region spans 28–48 (RAEIAQRLGFRSPNAAEEHLK). Catalysis depends on for autocatalytic cleavage activity residues serine 119 and lysine 156.

It belongs to the peptidase S24 family. As to quaternary structure, homodimer.

The enzyme catalyses Hydrolysis of Ala-|-Gly bond in repressor LexA.. Functionally, represses a number of genes involved in the response to DNA damage (SOS response), including recA and lexA. Binds to the 16 bp palindromic sequence 5'-CTGTATATATATACAG-3'. In the presence of single-stranded DNA, RecA interacts with LexA causing an autocatalytic cleavage which disrupts the DNA-binding part of LexA, leading to derepression of the SOS regulon and eventually DNA repair. The chain is LexA repressor from Klebsiella pneumoniae (strain 342).